The primary structure comprises 686 residues: Zinc finger protein 7 (686 aa).

Residues 4–76 (VTFGDVAVHF…DLQGAEGTEA (73 aa)) enclose the KRAB domain. Residues lysine 81 and lysine 101 each participate in a glycyl lysine isopeptide (Lys-Gly) (interchain with G-Cter in SUMO2) cross-link. A phosphoserine mark is found at serine 126 and serine 138. C2H2-type zinc fingers lie at residues 223–245 (SRCQ…NNCH), 250–272 (YECA…QRIH), 278–300 (FKCT…QRIH), 306–328 (YRCE…QRIH), 334–356 (YGCR…QRTH), and 362–384 (YPCK…QRMH). Residues lysine 279 and lysine 292 each participate in a glycyl lysine isopeptide (Lys-Gly) (interchain with G-Cter in SUMO2) cross-link. Lysine 393 is covalently cross-linked (Glycyl lysine isopeptide (Lys-Gly) (interchain with G-Cter in SUMO2)). 9 C2H2-type zinc fingers span residues 413-435 (FKCD…QLIH), 441-463 (YKCN…QRTH), 469-491 (FKCD…QRIH), 497-519 (YVCN…QRIH), 525-547 (YECL…QRVH), 553-575 (YKCN…QIIH), 581-603 (YECS…QRIH), 634-656 (HQCE…QRIH), and 662-684 (YKCN…QKIH).

This sequence belongs to the krueppel C2H2-type zinc-finger protein family.

The protein localises to the nucleus. Its function is as follows. May be involved in transcriptional regulation. This chain is Zinc finger protein 7 (ZNF7), found in Pongo abelii (Sumatran orangutan).